A 1378-amino-acid chain; its full sequence is DNA-directed RNA polymerase subunit beta (1378 aa).

This sequence belongs to the RNA polymerase beta chain family. In terms of assembly, the RNAP catalytic core consists of 2 alpha, 1 beta, 1 beta' and 1 omega subunit. When a sigma factor is associated with the core the holoenzyme is formed, which can initiate transcription.

The catalysed reaction is RNA(n) + a ribonucleoside 5'-triphosphate = RNA(n+1) + diphosphate. Its function is as follows. DNA-dependent RNA polymerase catalyzes the transcription of DNA into RNA using the four ribonucleoside triphosphates as substrates. The sequence is that of DNA-directed RNA polymerase subunit beta from Roseobacter denitrificans (strain ATCC 33942 / OCh 114) (Erythrobacter sp. (strain OCh 114)).